The following is a 523-amino-acid chain: MSAADFAFLIAESDLFDWSLTVALVIGGALGFLVVWAFTRHTRRMAHEQAAELEEVARREAAVAAEEIRQKAEAEIQEKRAELNRDFDRREIESEVRLREIRAHEESLALLDYQLEQRQERLNRETAAMRQARDAIRALSKSVRQRLEGVSQMDAESIRQALREEVQLECQDELRALRREIMEKSEQDLQTEGRRIMIAAMQRLASKPNNDLTSTIVSLPNEDMKGRIIGREGRNIKAFEAATGVTVLIDESPQTVLISSFDPIRREVARGALEALIKDGRIHPATIEEFVKRAHEEIELSAMQAGEDAVTRLNINGLHPEIIKLLGKLKFRFSYNQNVLDHSVETASLASMIASEVGLDPNVAKRAGLLHDIGKAVNADYEGSHAHIGAEFIRRYGETPIVVNSVAAHHEEVKPETVYAGLVILADTISATRPGARAESMAGYIQRLGRLEKLAMAIDGVQQAFAIQAGREIRVVVSPQTVTDDRAREIAKELRKRIEAELQYPSTIKITVIREQRFTETAT.

A helical transmembrane segment spans residues 18–38; that stretch reads WSLTVALVIGGALGFLVVWAF. The region spanning 213-276 is the KH domain; the sequence is TSTIVSLPNE…EVARGALEAL (64 aa). Residues 339 to 432 enclose the HD domain; sequence VLDHSVETAS…VILADTISAT (94 aa).

This sequence belongs to the RNase Y family.

The protein resides in the cell membrane. Endoribonuclease that initiates mRNA decay. The protein is Ribonuclease Y of Opitutus terrae (strain DSM 11246 / JCM 15787 / PB90-1).